The following is a 392-amino-acid chain: G2/mitotic-specific cyclin-B2 (392 aa).

It belongs to the cyclin family. Cyclin AB subfamily. As to quaternary structure, interacts with the CDK1 protein kinase to form a serine/threonine kinase holoenzyme complex also known as maturation promoting factor (MPF). The cyclin subunit imparts substrate specificity to the complex.

Essential for the control of the cell cycle at the G2/M (mitosis) transition. The chain is G2/mitotic-specific cyclin-B2 (CCNB2) from Rana japonica (Japanese reddish frog).